A 569-amino-acid polypeptide reads, in one-letter code: Isochorismate synthase 1, chloroplastic (569 aa).

The transit peptide at 1-45 (MASLQFSSQFLGSNTKTHSSIISISRSYSPTPFTRFSRKKYESCS) directs the protein to the chloroplast.

It belongs to the isochorismate synthase family. As to quaternary structure, monomer. Mg(2+) is required as a cofactor. Leaves.

It localises to the plastid. The protein resides in the chloroplast. It catalyses the reaction chorismate = isochorismate. Its pathway is siderophore biosynthesis; salicylate biosynthesis. In terms of biological role, isochorismate synthase involved in the synthesis of salicylic acid (SA) required for both local and systemic acquired resistance (LAR and SAR) while SA synthesized through the phenylalanine ammonium lyase (PAL) pathway seems to potentiate plant cell death. Also involved in phylloquinone (vitamin K1) synthesis. Has no isochorismate pyruvate lyase (IPL) activity. The polypeptide is Isochorismate synthase 1, chloroplastic (ICS1) (Arabidopsis thaliana (Mouse-ear cress)).